The following is a 184-amino-acid chain: Elongation factor P (184 aa).

Belongs to the elongation factor P family.

Its subcellular location is the cytoplasm. It participates in protein biosynthesis; polypeptide chain elongation. Its function is as follows. Involved in peptide bond synthesis. Stimulates efficient translation and peptide-bond synthesis on native or reconstituted 70S ribosomes in vitro. Probably functions indirectly by altering the affinity of the ribosome for aminoacyl-tRNA, thus increasing their reactivity as acceptors for peptidyl transferase. This Mycoplasma mycoides subsp. mycoides SC (strain CCUG 32753 / NCTC 10114 / PG1) protein is Elongation factor P.